A 106-amino-acid chain; its full sequence is uncharacterized protein (106 aa).

This sequence belongs to the HesB/IscA family.

This is an uncharacterized protein from Rhodobacter capsulatus (Rhodopseudomonas capsulata).